The chain runs to 123 residues: SGSCTTKTCWTMLPKFRELGYILKEKYNEAVQVEPVRTHRNKRPVFLKIKKPLSYRKPMVTDLVYIEKSPNYCEEDPITGSVGTQGRMCNKTSSQNNSCDLMCCGRGYNTHQYSRVWQCNCKF.

Ser1 carries O-palmitoleoyl serine; by PORCN lipidation. Positions 33–61 (VEPVRTHRNKRPVFLKIKKPLSYRKPMVT) are disordered linker. Residues Cys89 and Cys104 are joined by a disulfide bond. 2 N-linked (GlcNAc...) asparagine glycosylation sites follow: Asn90 and Asn96.

The protein belongs to the Wnt family. In terms of assembly, forms a soluble 1:1 complex with AFM; this prevents oligomerization and is required for prolonged biological activity. The complex with AFM may represent the physiological form in body fluids. Interacts with FZD5. Interacts with PORCN. Post-translationally, palmitoleoylation is required for efficient binding to frizzled receptors. Depalmitoleoylation leads to Wnt signaling pathway inhibition.

It is found in the secreted. The protein localises to the extracellular space. The protein resides in the extracellular matrix. Ligand for members of the frizzled family of seven transmembrane receptors that functions in the canonical Wnt/beta-catenin signaling pathway. Plays an important role in embryonic development, including dorsal versus ventral patterning during limb development, skeleton development and urogenital tract development. Required for central nervous system (CNS) angiogenesis and blood-brain barrier regulation. The polypeptide is Protein Wnt-7a (WNT-7A) (Alopias vulpinus (Common thresher shark)).